A 120-amino-acid chain; its full sequence is DNA-directed RNA polymerase II subunit rpb11 (120 aa).

It belongs to the archaeal Rpo11/eukaryotic RPB11/RPC19 RNA polymerase subunit family. Component of the RNA polymerase II (Pol II) complex consisting of 12 subunits.

It localises to the nucleus. Functionally, DNA-dependent RNA polymerase catalyzes the transcription of DNA into RNA using the four ribonucleoside triphosphates as substrates. Component of RNA polymerase II which synthesizes mRNA precursors and many functional non-coding RNAs. Pol II is the central component of the basal RNA polymerase II transcription machinery. It is composed of mobile elements that move relative to each other. RPB11 is part of the core element with the central large cleft. The protein is DNA-directed RNA polymerase II subunit rpb11 (polr2j) of Dictyostelium discoideum (Social amoeba).